The following is a 201-amino-acid chain: Recombination protein RecR (201 aa).

A C4-type zinc finger spans residues 60-75 (CSRCGNVDTVDPCTVC). Positions 83–178 (SVIIVVEDVS…KITRLAHGVP (96 aa)) constitute a Toprim domain.

The protein belongs to the RecR family.

May play a role in DNA repair. It seems to be involved in an RecBC-independent recombinational process of DNA repair. It may act with RecF and RecO. The protein is Recombination protein RecR of Rhizobium etli (strain ATCC 51251 / DSM 11541 / JCM 21823 / NBRC 15573 / CFN 42).